A 99-amino-acid chain; its full sequence is METLSFEFPAGQPPKGRALVGVVGSGDLEVLLEPGQPGKLSIQVVTSVNGASLRWKHLFERMFDGQTPPALSIDIHDFGATPGVVRLRLEQGFEEIGHD.

Ser25 carries the post-translational modification O-(phosphoribosyl dephospho-coenzyme A)serine.

Belongs to the MdcC family. In terms of processing, covalently binds the prosthetic group of malonate decarboxylase.

The protein resides in the cytoplasm. Subunit of malonate decarboxylase, it is an acyl carrier protein to which acetyl and malonyl thioester residues are bound via a 2'-(5''-phosphoribosyl)-3'-dephospho-CoA prosthetic group and turn over during the catalytic mechanism. The chain is Malonate decarboxylase acyl carrier protein from Pseudomonas syringae pv. tomato (strain ATCC BAA-871 / DC3000).